A 396-amino-acid polypeptide reads, in one-letter code: FAD-dependent monooxygenase phomE' (396 aa).

Glu-3 serves as a coordination point for FAD. Active-site residues include Arg-158 and Tyr-196. FAD is bound by residues Asp-277 and Gly-290.

Belongs to the paxM FAD-dependent monooxygenase family. As to quaternary structure, monomer. FAD serves as cofactor.

In terms of biological role, FAD-dependent monooxygenase; part of the gene cluster that mediates the biosynthesis of the phomopsins, a group of hexapeptide mycotoxins which infects lupins and causes lupinosis disease in livestock. The role of phomE' within the phomopsins biosynthesis pathway has still to be determined. The pathway starts with the processing of the precursor phomA by several endopeptidases including kexin proteases as well as the cluster-specific S41 family peptidase phomP1 and the oligopeptidase phomG to produce 10 identical copies of the hexapeptide Tyr-Val-Ile-Pro-Ile-Asp. After being excised from the precursor peptide, the core peptides are cyclized and modified post-translationally by enzymes encoded within the gene cluster. The timing and order of proteolysis of the phomA precursor and PTMs are still unknown. Two tyrosinase-like enzymes, phomQ1 and phomQ2, catalyze the chlorination and hydroxylation of Tyr, respectively. PhomYb, is proposed to be involved in the construction of the macrocyclic structure. The other 4 ustYa family proteins may be involved in PTMs that generate the unique structure of phomopsin A. PhomYa is required for the hydroxylation of C-beta of Tyr. PhomYc, phomYd, and phomYe are responsible for the biosynthesis of 2,3-dehydroisoleucine (dIle), 2,3-dehydroaspartic acid (dAsp), and 3,4-dehydroproline (dPro), respectively. While dIle formation by phomYc is indispensable for the installation of dAsp by phomYd, the order of the other PTMs have not been elucidated yet. Most of the biosynthetic enzymes likely have broad substrate specificity, and thus, there might be a metabolic grid from a precursor to phomopsin A. The enzyme(s) responsible for the biosynthesis of 3,4-dehydrovaline (dVal) have also not been identified yet. Finally, phomM acts as an S-adenosylmethionine-dependent alpha-N-methyltransferase that catalyzes two successive N-methylation reactions, converting N-desmethyl-phomopsin A to phomopsin A and phomopsin A further to an N,N-dimethylated congener called phomopsin E. The sequence is that of FAD-dependent monooxygenase phomE' from Diaporthe leptostromiformis (Lupinosis disease fungus).